Consider the following 330-residue polypeptide: Putative quinone oxidoreductase YhfP (330 aa).

NADP(+) is bound by residues Tyr45, 160-163, 182-184, Arg202, Leu248, Ile262, Ser273, and Asn320; these read TGGV and TGN.

This sequence belongs to the zinc-containing alcohol dehydrogenase family. Quinone oxidoreductase subfamily. In terms of assembly, homodimer, or homotetramer.

Its subcellular location is the cytoplasm. The protein is Putative quinone oxidoreductase YhfP (yhfP) of Bacillus subtilis (strain 168).